The following is a 574-amino-acid chain: PI-PLC X domain-containing protein DDB_G0269228 (574 aa).

The segment at 1-42 is disordered; it reads MFSSIMFKKKPKQNLNENEITSQSTTTTSTLSDSKPSEKKIK. Positions 21 to 34 are enriched in low complexity; sequence TSQSTTTTSTLSDS. The PI-PLC X-box domain occupies 270-449; it reads GIKSSSLRVP…LKKRIINDDG (180 aa).

In Dictyostelium discoideum (Social amoeba), this protein is PI-PLC X domain-containing protein DDB_G0269228.